Here is a 525-residue protein sequence, read N- to C-terminus: G-protein regulator 1 (525 aa).

In terms of domain architecture, GoLoco spans 424 to 445 (PVDMMDLIFSMSSRMDDQRTEL). Positions 488–525 (HTMNRILKRSKKSKSSLDSTNSMQGDDTRSDDVTMTSK) are disordered.

In terms of assembly, interacts with gpr-1, lin-5 and GDP-bound goa-1.

It is found in the cytoplasm. The protein localises to the cell cortex. It localises to the cytoskeleton. The protein resides in the spindle. In terms of biological role, in the 1-cell embryo, probably together with gpr-2, controls nuclear rotation and spindle elongation during mitosis. Complex of gpr-1 and gpr-2, in association with lin-5, activates G-protein signaling to affect mitotic spindle force. Polarity determinants (par genes) may regulate lin-5/gpr-1/gpr-2/goa-1 locally to create the asymmetric forces that drive spindle movement. This is G-protein regulator 1 (gpr-1) from Caenorhabditis elegans.